A 156-amino-acid polypeptide reads, in one-letter code: E3 ubiquitin-protein ligase RNF181 (156 aa).

Residues 79–120 (CPVCLLEFEEGETVRQLPCEHLFHSSCILPWLGKTNSCPLCR) form an RING-type; atypical zinc finger.

The protein belongs to the RNF181 family.

The catalysed reaction is S-ubiquitinyl-[E2 ubiquitin-conjugating enzyme]-L-cysteine + [acceptor protein]-L-lysine = [E2 ubiquitin-conjugating enzyme]-L-cysteine + N(6)-ubiquitinyl-[acceptor protein]-L-lysine.. The protein operates within protein modification; protein ubiquitination. Functionally, E3 ubiquitin-protein ligase which accepts ubiquitin from an E2 ubiquitin-conjugating enzyme in the form of a thioester and then directly transfers the ubiquitin to targeted substrates. Catalyzes monoubiquitination of 26S proteasome subunit PSMC2/RPT1. This is E3 ubiquitin-protein ligase RNF181 (rnf181) from Xenopus tropicalis (Western clawed frog).